A 481-amino-acid chain; its full sequence is MSIPAVPSPQIAVNDVGSSEDFLAAIDKTIKYFNDGDIVEGTIVKVDRDEVLLDIGYKTEGVIPARELSIKHDVDPNEVVSVGDEVEALVLTKEDKEGRLILSKKRAQYERAWGTIEALKEKDEAVKGIVIEVVKGGLILDIGLRGFLPASLVEMRRVRDLQPYIGKEIEAKIIELDKNRNNVVLSRRAWLEQTQSEVRSEFLNQLQKGAIRKGVVSSIVNFGAFVDLGGVDGLVHVSELSWKHIDHPSEVVQVGNEVTVEVLDVDMDRERVSLSLKATQEDPWRHFARTHAIGQIVPGKVTKLVPFGAFVRVEEGIEGLVHISELAERHVEVPDQVVAVGDDAMVKVIDIDLERRRISLSLKQANEDYIEEFDPAKYGMADSYDEQGNYIFPEGFDPDSNEWLEGFDTQRAEWEARYAEAERRYKMHTIQMEKFAATEEAGHGSSEQPPASSTPSAKATGGSLASDAQLAALREKLAGSA.

4 consecutive S1 motif domains span residues 36–105 (GDIV…LSKK), 123–188 (DEAV…LSRR), 209–277 (GAIR…LSLK), and 294–363 (GQIV…LSLK). Residues 437–465 (ATEEAGHGSSEQPPASSTPSAKATGGSLA) form a disordered region. The span at 445–457 (SSEQPPASSTPSA) shows a compositional bias: polar residues.

Belongs to the bacterial ribosomal protein bS1 family.

In terms of biological role, binds mRNA; thus facilitating recognition of the initiation point. It is needed to translate mRNA with a short Shine-Dalgarno (SD) purine-rich sequence. In Mycobacterium leprae (strain TN), this protein is Small ribosomal subunit protein bS1 (rpsA).